We begin with the raw amino-acid sequence, 498 residues long: Probable cytosol aminopeptidase (498 aa).

Mn(2+) contacts are provided by lysine 262 and aspartate 267. Lysine 274 is a catalytic residue. Residues aspartate 285, aspartate 344, and glutamate 346 each coordinate Mn(2+). Arginine 348 is a catalytic residue.

The protein belongs to the peptidase M17 family. The cofactor is Mn(2+).

The protein resides in the cytoplasm. It carries out the reaction Release of an N-terminal amino acid, Xaa-|-Yaa-, in which Xaa is preferably Leu, but may be other amino acids including Pro although not Arg or Lys, and Yaa may be Pro. Amino acid amides and methyl esters are also readily hydrolyzed, but rates on arylamides are exceedingly low.. The catalysed reaction is Release of an N-terminal amino acid, preferentially leucine, but not glutamic or aspartic acids.. In terms of biological role, presumably involved in the processing and regular turnover of intracellular proteins. Catalyzes the removal of unsubstituted N-terminal amino acids from various peptides. In Phytoplasma mali (strain AT), this protein is Probable cytosol aminopeptidase.